Consider the following 319-residue polypeptide: Putative peptide biosynthesis protein YydG (319 aa).

A Radical SAM core domain is found at 1-214 (MYNKTVSINL…HCPGYDIVYH (214 aa)). [4Fe-4S] cluster is bound by residues C14, C18, and C21.

The cofactor is [4Fe-4S] cluster.

Its function is as follows. Required for production of the modified peptide YydF. May activate a metalloenzyme (Potential). The protein is Putative peptide biosynthesis protein YydG (yydG) of Bacillus subtilis (strain 168).